The following is a 472-amino-acid chain: SURF6 homolog gldi-11 (472 aa).

4 disordered regions span residues 53-73 (LSKK…AKGL), 89-232 (KSKQ…SPEI), 249-350 (KVER…DRAL), and 414-472 (LVKK…GRIL). Low complexity predominate over residues 95–106 (KVQPQKVVAPVK). Over residues 107 to 132 (RPADQNKNKEKVVKKDQKKQDKKADS) the composition is skewed to basic and acidic residues. Positions 133 to 150 (DSEEDDSSDDEEKEETDE) are enriched in acidic residues. The span at 151-160 (PVAKKQKKEE) shows a compositional bias: basic and acidic residues. 2 stretches are compositionally biased toward acidic residues: residues 161-175 (SSDD…EEPE) and 182-194 (EAED…EEEE). The segment covering 197-210 (SKPNKTVAQSTLKS) has biased composition (polar residues). Positions 212-221 (GKIDKEIQKL) are enriched in basic and acidic residues. Residues 274-285 (LKRRESKLKLKQ) show a composition bias toward basic residues. Basic and acidic residues predominate over residues 286 to 305 (RRAEEKKGKEAAAQVKKETV). A compositionally biased stretch (basic residues) spans 414 to 426 (LVKKNKMKDRRKQ). The span at 427 to 443 (KWENRENKTEGEKQTKQ) shows a compositional bias: basic and acidic residues. Residues 459 to 472 (KRKMNKLRNKGRIL) are compositionally biased toward basic residues.

The protein belongs to the SURF6 family.

It localises to the nucleus. Its subcellular location is the nucleoplasm. Functionally, binds to both DNA and RNA in vitro, with a stronger binding capacity for RNA. May represent a nucleolar constitutive protein involved in ribosomal biosynthesis or assembly. The chain is SURF6 homolog gldi-11 from Caenorhabditis elegans.